The chain runs to 48 residues: uncharacterized protein (48 aa).

This is an uncharacterized protein from Acidianus convivator (ABV).